The sequence spans 353 residues: 3-isopropylmalate dehydrogenase (353 aa).

Position 75–88 (75–88 (GPKWENLPHEHKPE)) interacts with NAD(+). Residues Arg95, Arg105, Arg133, and Asp219 each contribute to the substrate site. Residues Asp219, Asp243, and Asp247 each coordinate Mg(2+). Residue 276–288 (GSAPDIAGKNIAN) coordinates NAD(+).

The protein belongs to the isocitrate and isopropylmalate dehydrogenases family. LeuB type 1 subfamily. Homodimer. Mg(2+) serves as cofactor. The cofactor is Mn(2+).

Its subcellular location is the cytoplasm. The enzyme catalyses (2R,3S)-3-isopropylmalate + NAD(+) = 4-methyl-2-oxopentanoate + CO2 + NADH. It functions in the pathway amino-acid biosynthesis; L-leucine biosynthesis; L-leucine from 3-methyl-2-oxobutanoate: step 3/4. Its function is as follows. Catalyzes the oxidation of 3-carboxy-2-hydroxy-4-methylpentanoate (3-isopropylmalate) to 3-carboxy-4-methyl-2-oxopentanoate. The product decarboxylates to 4-methyl-2 oxopentanoate. The protein is 3-isopropylmalate dehydrogenase of Chlorobium luteolum (strain DSM 273 / BCRC 81028 / 2530) (Pelodictyon luteolum).